A 750-amino-acid polypeptide reads, in one-letter code: MIIRSPEPEVKILVDRDPVKTSFEEWARPGHFSRTLAKGPETTTWIWNLHADAHDFDSHTSDLEEISRKIFSAHFGQLSIIFLWLSGMYFHGARFSNYEAWLSDPTHIRPSAQVVWPIVGQEILNGDVGGGFRGIQITSGFFQIWRASGITSELQLYCTAIGALVFAALMLFAGWFHYHKAAPKLAWFQDVESMLNHHLAGLLGLGSLSWAGHQVHVSLPINQFLDAGVDPKEIPLPHEFILNRDLLAQLYPSFAEGATPFFTLNWSKYAEFLTFRGGLDPVTGGLWLTDIAHHHLAIAILFLIAGHMYRTNWGIGHGLKDILEAHKGPFTGQGHKGLYEILTTSWHAQLALNLAMLGSLTIVVAHHMYSMPPYPYLATDYGTQLSLFTHHMWIGGFLIVGAAAHAAIFMVRDYDPTTRYNDLLDRVLRHRDAIISHLNWACIFLGFHSFGLYIHNDTMSALGRPQDMFSDTAIQLQPVFAQWIQNTHALAPSATAPGATTSTSLTWGGGGLVAVGGKVALLPIPLGTADFLVHHIHAFTIHVTVLILLKGVLFARSSRLIPDKANLGFRFPCDGPGRGGTCQVSAWDHVFLGLFWMYNAISVVIFHFSWKMQSDVWGSINDQGVVTHITGGNFAQSSITINGWLRDFLWAQASQVIQSYGSSLSAYGLFFLGAHFVWAFSLMFLFSGRGYWQELIESIVWAHNKLKVAPATQPRALSIVQGRAVGVTHYLLGGIATTWAFFLARIIAVG.

8 consecutive transmembrane segments (helical) span residues 70–93 (IFSAHFGQLSIIFLWLSGMYFHGA), 156–179 (LYCTAIGALVFAALMLFAGWFHYH), 195–219 (LNHHLAGLLGLGSLSWAGHQVHVSL), 291–309 (IAHHHLAIAILFLIAGHMY), 346–369 (WHAQLALNLAMLGSLTIVVAHHMY), 385–411 (LSLFTHHMWIGGFLIVGAAAHAAIFMV), 433–455 (AIISHLNWACIFLGFHSFGLYIH), and 531–549 (FLVHHIHAFTIHVTVLILL). [4Fe-4S] cluster is bound by residues cysteine 573 and cysteine 582. Transmembrane regions (helical) follow at residues 589-610 (HVFLGLFWMYNAISVVIFHFSW) and 664-686 (LSAYGLFFLGAHFVWAFSLMFLF). Histidine 675 contacts chlorophyll a'. Positions 683 and 691 each coordinate chlorophyll a. Tryptophan 692 contacts phylloquinone. The helical transmembrane segment at 724 to 744 (AVGVTHYLLGGIATTWAFFLA) threads the bilayer.

It belongs to the PsaA/PsaB family. As to quaternary structure, the PsaA/B heterodimer binds the P700 chlorophyll special pair and subsequent electron acceptors. PSI consists of a core antenna complex that captures photons, and an electron transfer chain that converts photonic excitation into a charge separation. The eukaryotic PSI reaction center is composed of at least 11 subunits. It depends on P700 is a chlorophyll a/chlorophyll a' dimer, A0 is one or more chlorophyll a, A1 is one or both phylloquinones and FX is a shared 4Fe-4S iron-sulfur center. as a cofactor.

The protein localises to the plastid. The protein resides in the chloroplast thylakoid membrane. The catalysed reaction is reduced [plastocyanin] + hnu + oxidized [2Fe-2S]-[ferredoxin] = oxidized [plastocyanin] + reduced [2Fe-2S]-[ferredoxin]. Functionally, psaA and PsaB bind P700, the primary electron donor of photosystem I (PSI), as well as the electron acceptors A0, A1 and FX. PSI is a plastocyanin-ferredoxin oxidoreductase, converting photonic excitation into a charge separation, which transfers an electron from the donor P700 chlorophyll pair to the spectroscopically characterized acceptors A0, A1, FX, FA and FB in turn. Oxidized P700 is reduced on the lumenal side of the thylakoid membrane by plastocyanin. This Nandina domestica (Heavenly bamboo) protein is Photosystem I P700 chlorophyll a apoprotein A1.